Here is an 82-residue protein sequence, read N- to C-terminus: Small ribosomal subunit protein bS18 (82 aa).

Belongs to the bacterial ribosomal protein bS18 family. In terms of assembly, part of the 30S ribosomal subunit. Forms a tight heterodimer with protein bS6.

In terms of biological role, binds as a heterodimer with protein bS6 to the central domain of the 16S rRNA, where it helps stabilize the platform of the 30S subunit. The chain is Small ribosomal subunit protein bS18 from Chlamydia felis (strain Fe/C-56) (Chlamydophila felis).